Consider the following 252-residue polypeptide: Adenosylcobinamide-GDP ribazoletransferase (252 aa).

7 helical membrane-spanning segments follow: residues 35–55, 58–78, 113–133, 139–159, 170–190, 192–212, and 231–251; these read AMLPLIGLIVGCIQWVVFYIL, IFPANITAIFIILVGMVLIGG, FAVLALIFDILIKYSALSFII, YAIIITPIMSRCTLVFLFLIG, LFIENVSVKEFIISFIFMIVP, VLLIGYKYSVIIIVVSFIITL, and GANNEIVEMFTMLVFVALLYI.

It belongs to the CobS family. Mg(2+) serves as cofactor.

The protein resides in the cell membrane. It catalyses the reaction alpha-ribazole + adenosylcob(III)inamide-GDP = adenosylcob(III)alamin + GMP + H(+). The catalysed reaction is alpha-ribazole 5'-phosphate + adenosylcob(III)inamide-GDP = adenosylcob(III)alamin 5'-phosphate + GMP + H(+). Its pathway is cofactor biosynthesis; adenosylcobalamin biosynthesis; adenosylcobalamin from cob(II)yrinate a,c-diamide: step 7/7. In terms of biological role, joins adenosylcobinamide-GDP and alpha-ribazole to generate adenosylcobalamin (Ado-cobalamin). Also synthesizes adenosylcobalamin 5'-phosphate from adenosylcobinamide-GDP and alpha-ribazole 5'-phosphate. The polypeptide is Adenosylcobinamide-GDP ribazoletransferase (Clostridium tetani (strain Massachusetts / E88)).